The sequence spans 173 residues: MIFKGKAHKYYDNIDTDVIIPARYLNTSDPAELAKHCLEDLDKEFVNKVKKGDILVAGRNFGCGSSREHAPIAIKACGVSCVIAKSFARIFYRNAINIGLPIVECEEAVDGIEAGDEVEVDLVKGIIKNLTKNKEFKAKPFPEFMQNIMKAGGLIEFVKGELKKDAWDSCNSW.

The protein belongs to the LeuD family. LeuD type 2 subfamily. As to quaternary structure, heterodimer of LeuC and LeuD.

The catalysed reaction is (2R,3S)-3-isopropylmalate = (2S)-2-isopropylmalate. The protein operates within amino-acid biosynthesis; L-leucine biosynthesis; L-leucine from 3-methyl-2-oxobutanoate: step 2/4. Its function is as follows. Catalyzes the isomerization between 2-isopropylmalate and 3-isopropylmalate, via the formation of 2-isopropylmaleate. The protein is 3-isopropylmalate dehydratase small subunit of Caldicellulosiruptor saccharolyticus (strain ATCC 43494 / DSM 8903 / Tp8T 6331).